The primary structure comprises 226 residues: uncharacterized protein (226 aa).

Residues 203 to 225 (FGISDIYTSTLSFGLIISLFYLL) form a helical membrane-spanning segment.

The protein localises to the membrane. This is an uncharacterized protein from Acanthamoeba polyphaga (Amoeba).